Reading from the N-terminus, the 358-residue chain is 3-isopropylmalate dehydrogenase (358 aa).

77 to 90 is a binding site for NAD(+); the sequence is GPKWTNLPPDQQPE. Residues arginine 98, arginine 108, arginine 137, and aspartate 226 each coordinate substrate. Aspartate 226, aspartate 250, and aspartate 254 together coordinate Mg(2+). Residue 284-296 participates in NAD(+) binding; the sequence is GSAPDIAGKGIAN.

It belongs to the isocitrate and isopropylmalate dehydrogenases family. LeuB type 1 subfamily. In terms of assembly, homodimer. The cofactor is Mg(2+). Requires Mn(2+) as cofactor.

It is found in the cytoplasm. It catalyses the reaction (2R,3S)-3-isopropylmalate + NAD(+) = 4-methyl-2-oxopentanoate + CO2 + NADH. It participates in amino-acid biosynthesis; L-leucine biosynthesis; L-leucine from 3-methyl-2-oxobutanoate: step 3/4. Catalyzes the oxidation of 3-carboxy-2-hydroxy-4-methylpentanoate (3-isopropylmalate) to 3-carboxy-4-methyl-2-oxopentanoate. The product decarboxylates to 4-methyl-2 oxopentanoate. The polypeptide is 3-isopropylmalate dehydrogenase (Haemophilus influenzae (strain 86-028NP)).